A 96-amino-acid chain; its full sequence is Protein Vpr (96 aa).

The homooligomerization stretch occupies residues Met-1–Leu-42. Phosphoserine; by host occurs at positions 79, 94, and 96.

Belongs to the HIV-1 VPR protein family. As to quaternary structure, homooligomer, may form homodimer. Interacts with p6-gag region of the Pr55 Gag precursor protein through a (Leu-X-X)4 motif near the C-terminus of the P6gag protein. Interacts with host UNG. May interact with host RAD23A/HHR23A. Interacts with host VPRBP/DCAF1, leading to hijack the CUL4A-RBX1-DDB1-DCAF1/VPRBP complex, mediating ubiquitination of host proteins such as TERT and ZGPAT and arrest of the cell cycle in G2 phase. In terms of processing, phosphorylated on several residues by host. These phosphorylations regulate VPR activity for the nuclear import of the HIV-1 pre-integration complex.

It is found in the virion. It localises to the host nucleus. The protein localises to the host extracellular space. Its function is as follows. During virus replication, may deplete host UNG protein, and incude G2-M cell cycle arrest. Acts by targeting specific host proteins for degradation by the 26S proteasome, through association with the cellular CUL4A-DDB1 E3 ligase complex by direct interaction with host VPRPB/DCAF-1. Cell cycle arrest reportedly occurs within hours of infection and is not blocked by antiviral agents, suggesting that it is initiated by the VPR carried into the virion. Additionally, VPR induces apoptosis in a cell cycle dependent manner suggesting that these two effects are mechanistically linked. Detected in the serum and cerebrospinal fluid of AIDS patient, VPR may also induce cell death to bystander cells. Functionally, during virus entry, plays a role in the transport of the viral pre-integration (PIC) complex to the host nucleus. This function is crucial for viral infection of non-dividing macrophages. May act directly at the nuclear pore complex, by binding nucleoporins phenylalanine-glycine (FG)-repeat regions. This is Protein Vpr from Human immunodeficiency virus type 1 group M subtype B (isolate SF33) (HIV-1).